A 454-amino-acid polypeptide reads, in one-letter code: Bifunctional protein GlmU (454 aa).

Positions 1 to 226 (MSTTVIILAA…AFEVEGVNDR (226 aa)) are pyrophosphorylase. UDP-N-acetyl-alpha-D-glucosamine contacts are provided by residues 8–11 (LAAG), K22, Q73, 78–79 (GT), 100–102 (YGD), G137, E151, N166, and N224. D102 is a binding site for Mg(2+). N224 serves as a coordination point for Mg(2+). The segment at 227–247 (LQLAALEREFQKQQAKELMQQ) is linker. Residues 248–454 (GVTFADPARF…NYQRPQKLKK (207 aa)) are N-acetyltransferase. 2 residues coordinate UDP-N-acetyl-alpha-D-glucosamine: R330 and K348. The active-site Proton acceptor is the H360. Positions 363 and 374 each coordinate UDP-N-acetyl-alpha-D-glucosamine. Acetyl-CoA contacts are provided by residues A377, 383–384 (NY), S402, A420, and R437.

The protein in the N-terminal section; belongs to the N-acetylglucosamine-1-phosphate uridyltransferase family. In the C-terminal section; belongs to the transferase hexapeptide repeat family. Homotrimer. Mg(2+) serves as cofactor.

The protein localises to the cytoplasm. The enzyme catalyses alpha-D-glucosamine 1-phosphate + acetyl-CoA = N-acetyl-alpha-D-glucosamine 1-phosphate + CoA + H(+). It carries out the reaction N-acetyl-alpha-D-glucosamine 1-phosphate + UTP + H(+) = UDP-N-acetyl-alpha-D-glucosamine + diphosphate. The protein operates within nucleotide-sugar biosynthesis; UDP-N-acetyl-alpha-D-glucosamine biosynthesis; N-acetyl-alpha-D-glucosamine 1-phosphate from alpha-D-glucosamine 6-phosphate (route II): step 2/2. It functions in the pathway nucleotide-sugar biosynthesis; UDP-N-acetyl-alpha-D-glucosamine biosynthesis; UDP-N-acetyl-alpha-D-glucosamine from N-acetyl-alpha-D-glucosamine 1-phosphate: step 1/1. Its pathway is bacterial outer membrane biogenesis; LPS lipid A biosynthesis. Functionally, catalyzes the last two sequential reactions in the de novo biosynthetic pathway for UDP-N-acetylglucosamine (UDP-GlcNAc). The C-terminal domain catalyzes the transfer of acetyl group from acetyl coenzyme A to glucosamine-1-phosphate (GlcN-1-P) to produce N-acetylglucosamine-1-phosphate (GlcNAc-1-P), which is converted into UDP-GlcNAc by the transfer of uridine 5-monophosphate (from uridine 5-triphosphate), a reaction catalyzed by the N-terminal domain. This Acinetobacter baumannii (strain ACICU) protein is Bifunctional protein GlmU.